We begin with the raw amino-acid sequence, 225 residues long: NAD(P)H-quinone oxidoreductase subunit K, chloroplastic (225 aa).

Residues cysteine 43, cysteine 44, cysteine 108, and cysteine 139 each coordinate [4Fe-4S] cluster.

Belongs to the complex I 20 kDa subunit family. In terms of assembly, NDH is composed of at least 16 different subunits, 5 of which are encoded in the nucleus. The cofactor is [4Fe-4S] cluster.

It localises to the plastid. Its subcellular location is the chloroplast thylakoid membrane. It catalyses the reaction a plastoquinone + NADH + (n+1) H(+)(in) = a plastoquinol + NAD(+) + n H(+)(out). The enzyme catalyses a plastoquinone + NADPH + (n+1) H(+)(in) = a plastoquinol + NADP(+) + n H(+)(out). NDH shuttles electrons from NAD(P)H:plastoquinone, via FMN and iron-sulfur (Fe-S) centers, to quinones in the photosynthetic chain and possibly in a chloroplast respiratory chain. The immediate electron acceptor for the enzyme in this species is believed to be plastoquinone. Couples the redox reaction to proton translocation, and thus conserves the redox energy in a proton gradient. The protein is NAD(P)H-quinone oxidoreductase subunit K, chloroplastic of Nymphaea alba (White water-lily).